Reading from the N-terminus, the 98-residue chain is MNPSAAVIFCLILLGLSGTQGIPLARTVRCNCIHIDDGPVRMRAIGKLEIIPASLSCPRVEIIATMKKNDEQRCLNPESKTIKNLMKAFSQKRSKRAP.

An N-terminal signal peptide occupies residues 1–21 (MNPSAAVIFCLILLGLSGTQG). Citrulline is present on R26. 2 disulfide bridges follow: C30/C57 and C32/C74.

Belongs to the intercrine alpha (chemokine CxC) family. Monomer, dimer, and tetramer. Interacts with CXCR3 (via N-terminus). Expressed in the spleen, thymus, lymph nodes and liver. Expressed in astrocytes, microglia, and neurons.

The protein localises to the secreted. Pro-inflammatory cytokine that is involved in a wide variety of processes such as chemotaxis, differentiation, and activation of peripheral immune cells, regulation of cell growth, apoptosis and modulation of angiostatic effects. Plays thereby an important role during viral infections by stimulating the activation and migration of immune cells to the infected sites. Mechanistically, binding of CXCL10 to the CXCR3 receptor activates G protein-mediated signaling and results in downstream activation of phospholipase C-dependent pathway, an increase in intracellular calcium production and actin reorganization. In turn, recruitment of activated Th1 lymphocytes occurs at sites of inflammation. Activation of the CXCL10/CXCR3 axis also plays an important role in neurons in response to brain injury for activating microglia, the resident macrophage population of the central nervous system, and directing them to the lesion site. This recruitment is an essential element for neuronal reorganization. The protein is C-X-C motif chemokine 10 (Cxcl10) of Mus musculus (Mouse).